The following is a 526-amino-acid chain: Fusicoccadiene 8-ol C-16-hydroxylase (526 aa).

Residues 34 to 56 (AFVGFSVLGLTLLFSKLFYNAYL) traverse the membrane as a helical segment. Asn309, Asn418, and Asn434 each carry an N-linked (GlcNAc...) asparagine glycan. Residue Cys470 participates in heme binding.

This sequence belongs to the cytochrome P450 family. The cofactor is heme.

The protein localises to the membrane. The protein operates within mycotoxin biosynthesis. Its function is as follows. Cytochrome P450 monooxygenase; part of the 2 gene clusters that mediate the biosynthesis of fusicoccins, diterpene glucosides that display phytohormone-like activity and function as potent activators of plasma membrane H(+)-ATPases in plants by modifying 14-3-3 proteins and cause the plant disease constriction canker. The first step in the pathway is performed by the fusicoccadiene synthase PaFS that possesses both prenyl transferase and terpene cyclase activity, converting isopentenyl diphosphate and dimethylallyl diphosphate into geranylgeranyl diphosphate (GGDP) and successively converting GGDP into fusicocca-2,10(14)-diene, a precursor for fusicoccin H. The second step is the oxidation at the C-8 position by the cytochrome P450 monooxygenase PaP450-2 to yield fusicocca-2,10(14)-diene-8-beta-ol. The cytochrome P450 monooxygenase PaP450-1 then catalyzes the hydroxylation at the C-16 position to produce fusicocca-2,10(14)-diene-8-beta,16-diol. The dioxygenase fc-dox then catalyzes the 16-oxydation of fusicocca-2,10(14)-diene-8-beta,16-diol to yield an aldehyde (8-beta-hydroxyfusicocca-1,10(14)-dien-16-al). The short-chain dehydrogenase/reductase fc-sdr catalyzes the reduction of the aldehyde to yield fusicocca-1,10(14)-diene-8-beta,16-diol. The next step is the hydroxylation at C-9 performed by the cytochrome P450 monooxygenase PaP450-3 that leads to fusicoccin H aglycon which is glycosylated to fusicoccin H by the O-glycosyltransferase PaGT. Hydroxylation at C-12 by the cytochrome P450 monooxygenase PaP450-4 leads then to the production of fusicoccin Q and is followed by methylation by the O-methyltransferase PaMT to yield fusicoccin P. Fusicoccin P is further converted to fusicoccin J via prenylation by the O-glucose prenyltransferase PaPT. Cytochrome P450 monooxygenase PaP450-5 then performs hydroxylation at C-19 to yield dideacetyl-fusicoccin A which is acetylated to 3'-O-deacetyl-fusicoccin A by the O-acetyltransferase PaAT-2. Finally, a another acetylation by the O-acetyltransferase PaAT-1 yields fusicoccin A. The chain is Fusicoccadiene 8-ol C-16-hydroxylase from Phomopsis amygdali (Fusicoccum amygdali).